A 303-amino-acid polypeptide reads, in one-letter code: Aspartate carbamoyltransferase catalytic subunit (303 aa).

Carbamoyl phosphate is bound by residues Arg-51 and Thr-52. Lys-80 is an L-aspartate binding site. 3 residues coordinate carbamoyl phosphate: Arg-101, His-129, and Gln-132. Residues Arg-162 and Arg-221 each coordinate L-aspartate. 2 residues coordinate carbamoyl phosphate: Leu-260 and Pro-261.

The protein belongs to the aspartate/ornithine carbamoyltransferase superfamily. ATCase family. In terms of assembly, heterooligomer of catalytic and regulatory chains.

The catalysed reaction is carbamoyl phosphate + L-aspartate = N-carbamoyl-L-aspartate + phosphate + H(+). Its pathway is pyrimidine metabolism; UMP biosynthesis via de novo pathway; (S)-dihydroorotate from bicarbonate: step 2/3. Functionally, catalyzes the condensation of carbamoyl phosphate and aspartate to form carbamoyl aspartate and inorganic phosphate, the committed step in the de novo pyrimidine nucleotide biosynthesis pathway. This Saccharolobus solfataricus (strain ATCC 35092 / DSM 1617 / JCM 11322 / P2) (Sulfolobus solfataricus) protein is Aspartate carbamoyltransferase catalytic subunit.